The primary structure comprises 1525 residues: MTRWPFNLLLLLSVAVRDCSNHRTVLTVGYLTALTGDLKTRQGLAISGALTMALDEVNKDPNLLPNVYLDLRWNDTKGDTVLATKAITEMICDGIATIFGPEGPCYVEAIVSQSRNIPMISYKCAEYRASAIPTFARTEPPDTQVVKSLLALLRYYAWNKFSILYEDVWSPVADLLKDQATKRNMTINHKQSFIDNRVKCCEQMLDCCRSGYWYQLVQNTMNRTRIYVFLGAANSLVDFMSSMETAGLFARGEYMVIFVDMMVYSEREAEKYLRRVDQITFMSNCHSTENFNQMARSLLVVASTPPTKDYIQFTKQVQKYSSKPPFNLEIPRLFVESNFSKFISIYAAYLYDSVKLYAWAVDKMLREETRVLTDDVIFEVASNGTRVIDTIIKNRTYMSITGSKIKIDQYGDSEGNFSVLAYKPHKWNNSNNMPCNYHMVPVAYFHQGEEHPEYKLINGSIDWPSGGEKPADEPMCGFANELCKKDDTHYTSTVAAVVLGVLLFCSGVITMSIYRKWKIELEIEGLLWKIDPNEIKGYSGNEIVSSPSKVSLMSAQSYGSRWTNQFVTSTGRLRGAVVRIKELKFPRKRDISREIMKEMRLLRELRHDNINSFIGASVEPTRILLVTDYCAKGSLYDIIENEDIKLDDLFIASLIHDLIKGMIYIHNSQLVYHGNLKSSNCVVTSRWMLQVTDFGLHELRQCAENESIGEHQHYRNQLWRAPELLRNHIHGSQKGDVYAFAIIMYEIFSRKGPFGQINFEPKEIVDYVKKLPLKGEDPFRPEVESIIEAESCPDYVLACIRDCWAEDPEERPEFSVIRNRLKKMRGGKTKNIMDQMMEMMEKYANNLEDIVTERTRLLCEEKMKTEDLLHRMLPQSVAEKLTMGQGVEPVSYDLVTIYFSDIVGFTAMSAESTPLQVVNFLNDLYTVFDRIIRGYDVYKVETIGDAYMVVSGLPIKNGDRHAGEIASMALELLHAVKQHRIAHRPNETLKLRIGMHTGPVVAGVVGLTMPRYCLFGDTVNTASRMESNGEALKIHISNKCKLALDKLGGGYITEKRGLVNMKGKGDVVTWWLTGANENAIQKKLVDMMDMPPPLFSRPRKSPKLNPDSRQPSIQAMHFCGTGSRRQSTVPRAMDGESTYSLQGSVRESPRMVSKRDRDRERPPINGLGAGHFVGGALLESAQASLSTLNHSETNETNCDMDGGSGGVSGSGSGLVRQPNALHKPLAMVRPHRIISAAQLPQLGDNDDDSADTLLRESRSLDPMPMQQLRKRHDRVKLPPSKLSKNNSRSLDTGVSLISGNPNGEVHSSQLDLDNEMTANPVDATDGYDDELGLLMRHDNGQLPALRYSGSFPNAQISIVPTGRSAGGGGGGREGGGSNCAKHLNNNCNGGVNVEDDLESPLLQRQASLSVPPEEMLAHNKRWHSLEHMDGPGGHGGNSVSYAADIDNRHPGDLDFFSGSSNQHHRSKAAGGSKLTNWMTNIFKGNGVRSGEARRVGILPSGVHGARTGFTDMAASAAARDRESIV.

An N-terminal signal peptide occupies residues 1 to 19; sequence MTRWPFNLLLLLSVAVRDC. Residues 20-493 are Extracellular-facing; sequence SNHRTVLTVG…KKDDTHYTST (474 aa). Residues Asn74, Asn184, Asn222, Asn338, Asn383, Asn394, Asn416, Asn428, and Asn458 are each glycosylated (N-linked (GlcNAc...) asparagine). Residues 494–514 traverse the membrane as a helical segment; that stretch reads VAAVVLGVLLFCSGVITMSIY. The Cytoplasmic portion of the chain corresponds to 515 to 1525; it reads RKWKIELEIE…AAARDRESIV (1011 aa). The 278-residue stretch at 547 to 824 folds into the Protein kinase domain; the sequence is PSKVSLMSAQ…SVIRNRLKKM (278 aa). Residues 553 to 561 and Lys581 contribute to the ATP site; that span reads MSAQSYGSR. Residues 896–1026 enclose the Guanylate cyclase domain; it reads TIYFSDIVGF…DTVNTASRME (131 aa). Asp901, Ile902, and Asp945 together coordinate Mg(2+). 3 disordered regions span residues 1122–1168, 1192–1217, and 1256–1308; these read GSRR…NGLG, ETNETNCDMDGGSGGVSGSGSGLVRQ, and ESRS…VHSS. Residues 1147–1162 are compositionally biased toward basic and acidic residues; that stretch reads ESPRMVSKRDRDRERP. Residues 1202 to 1212 are compositionally biased toward gly residues; the sequence is GGSGGVSGSGS. Polar residues predominate over residues 1282 to 1308; sequence LSKNNSRSLDTGVSLISGNPNGEVHSS.

Belongs to the adenylyl cyclase class-4/guanylyl cyclase family. As to quaternary structure, interacts with the semaphorin 1A receptor PlexA; PlexA enhances Gyc76C catalytic activity. Interacts with the PDZ domain-containing protein kermit; kermit increases cell surface expression of Gyc76C. In the adult, widely distributed in the head and thorax with highest levels in the optic lobe and central brain and expression also detected in the retina. Expressed at similar levels in adult head and body. In females, highly expressed in oocytes with lower levels in the digestive tract. In mid-embryogenesis, enriched in the circular visceral mesoderm that overlies the migrating salivary gland and in the fat body that underlies the gland but at background levels in the gland itself. In late embryogenesis, detected in the mature salivary gland, in the somatic body wall muscles and the tendon cells to which the muscles attach, and in the constricting midgut. Also expressed in migrating tracheal cells at mid-embryogenesis and in the developed trachea at the end of embryogenesis with enrichment in the apical domains.

Its subcellular location is the cell membrane. It catalyses the reaction GTP = 3',5'-cyclic GMP + diphosphate. In terms of biological role, guanylate cyclase involved in the production of the second messenger cGMP. Acts as a receptor for the NPLP1-4 peptide and modulates the innate immune IMD pathway in response to salt stress by inducing nuclear translocation of NF-kappa-B protein Rel which leads to increased expression of the antimicrobial peptide diptericin. Plays a role in Sema-1a-mediated axon repulsion which is required for the correct establishment of neuromuscular connectivity. Required in developing embryonic somatic muscle for correct patterning of ventral and lateral muscles and for localization of integrin beta-ps at developing dorsal muscle myotendinous junctions. Required for invagination, migration and lumen shape of the embryonic salivary gland by regulating the localization of the integrin-binding protein rhea/Talin to the visceral mesoderm surrounding the gland and maintaining the laminin matrix. Required in the developing wing to regulate extracellular matrix (ECM) organization by activating the cGMP-dependent protein kinase For which represses the activity of matrix metalloproteases such as Mmp2 and decreases ECM matrix reorganization. In Drosophila melanogaster (Fruit fly), this protein is Receptor-type guanylate cyclase Gyc76C.